The primary structure comprises 614 residues: Probable indole-3-acetic acid-amido synthetase GH3.2 (614 aa).

Belongs to the IAA-amido conjugating enzyme family. Expressed in roots, flowers and callus.

May catalyze the synthesis of indole-3-acetic acid (IAA)-amino acid conjugates, providing a mechanism for the plant to cope with the presence of excess auxin. In Oryza sativa subsp. japonica (Rice), this protein is Probable indole-3-acetic acid-amido synthetase GH3.2 (GH3.2).